The chain runs to 221 residues: Tetraspanin-2 (221 aa).

The Cytoplasmic segment spans residues 1–13; the sequence is MGRFRGGLRCIKY. The helical transmembrane segment at 14-34 threads the bilayer; the sequence is LLLGFNLLFWLAGSAVIAFGL. Over 35–54 the chain is Extracellular; it reads WFRFGGTMKDLSSEDKSPEY. Residues 55-75 traverse the membrane as a helical segment; it reads FYVGLYVLVGAGALMMTVGFF. At 76–90 the chain is on the cytoplasmic side; the sequence is GCCGAMRESQCVLGS. A helical transmembrane segment spans residues 91 to 111; the sequence is FFTCLLVIFAAEVTTGVFAFI. Residues 112–188 are Extracellular-facing; that stretch reads GKDVAIRHVQ…ETVISAKLQL (77 aa). Asn-139 is a glycosylation site (N-linked (GlcNAc...) asparagine). The helical transmembrane segment at 189 to 209 threads the bilayer; sequence IGIVGIGIAGLTIFGMIFSMV. Residues 210 to 221 lie on the Cytoplasmic side of the membrane; sequence LCCAIRNSRDVI.

The protein belongs to the tetraspanin (TM4SF) family.

Its subcellular location is the membrane. In terms of biological role, may play a role in signalling in oligodendrocytes in the early stages of their terminal differentiation into myelin-forming glia and may also function in stabilizing the mature sheath. This chain is Tetraspanin-2 (Tspan2), found in Mus musculus (Mouse).